A 101-amino-acid chain; its full sequence is Small ribosomal subunit protein uS14 (101 aa).

It belongs to the universal ribosomal protein uS14 family. In terms of assembly, part of the 30S ribosomal subunit. Contacts proteins S3 and S10.

In terms of biological role, binds 16S rRNA, required for the assembly of 30S particles and may also be responsible for determining the conformation of the 16S rRNA at the A site. The protein is Small ribosomal subunit protein uS14 of Maricaulis maris (strain MCS10) (Caulobacter maris).